A 1000-amino-acid chain; its full sequence is DENN domain-containing protein 2A (1000 aa).

Disordered regions lie at residues 1 to 155 (MLEA…LRFQ), 174 to 328 (DGSA…RKSY), 427 to 464 (KLLD…LGDL), and 491 to 525 (KRVK…LKAH). Polar residues predominate over residues 34-43 (QLNSVPNSGP). Composition is skewed to basic and acidic residues over residues 56–70 (IKDK…KEPP), 79–117 (DGQE…DSRA), 140–155 (SQHR…LRFQ), and 221–237 (HLEV…DWKG). 2 stretches are compositionally biased toward pro residues: residues 249 to 258 (PPKPFINPVP) and 288 to 307 (PPLP…PPPT). Residues 427–436 (KLLDTRKLSR) are compositionally biased toward basic and acidic residues. Polar residues predominate over residues 496 to 506 (LSQSTESNSGK). S544 is modified (phosphoserine). The region spanning 559-708 (EYFVVVSLHK…PFPALGKTII (150 aa)) is the uDENN domain. In terms of domain architecture, cDENN spans 730 to 863 (RLEHVDFESL…LQVALEHILE (134 aa)). The dDENN domain maps to 865–960 (RNDLACDQDG…QERELRRQDA (96 aa)).

It localises to the cytoplasm. The protein localises to the cytoskeleton. Guanine nucleotide exchange factor (GEF) which may activate RAB9A and RAB9B. Promotes the exchange of GDP to GTP, converting inactive GDP-bound Rab proteins into their active GTP-bound form. May play a role in late endosomes back to trans-Golgi network/TGN transport. The polypeptide is DENN domain-containing protein 2A (Dennd2a) (Mus musculus (Mouse)).